A 721-amino-acid chain; its full sequence is ATP-dependent zinc metalloprotease FtsH (721 aa).

The Cytoplasmic segment spans residues 1–44 (MYFLKKIVNLFSSKIESEDNNVKKDDLTQPRKQSPEARKRRNRR). A helical membrane pass occupies residues 45-65 (IIFWLIILLIIGTIIGVIIYF). Residues 66-190 (SVRKEYDNVI…AGIPSSGFNP (125 aa)) are Extracellular-facing. The chain crosses the membrane as a helical span at residues 191-211 (QVIISPLISIIFFIIFLYIIL). Over 212–721 (RVSKAQSDSL…KDKEKDQKSN (510 aa)) the chain is Cytoplasmic. 279-286 (GPPGTGKT) contacts ATP. Zn(2+) is bound at residue His-498. Residue Glu-499 is part of the active site. Zn(2+) is bound by residues His-502 and Asp-577. Residues 686-721 (NKREASQKQANSSVEEAKVVDDEESIKDKEKDQKSN) are disordered. Residues 700–721 (EEAKVVDDEESIKDKEKDQKSN) show a composition bias toward basic and acidic residues.

The protein in the central section; belongs to the AAA ATPase family. It in the C-terminal section; belongs to the peptidase M41 family. In terms of assembly, homohexamer. It depends on Zn(2+) as a cofactor.

It is found in the cell membrane. Acts as a processive, ATP-dependent zinc metallopeptidase for both cytoplasmic and membrane proteins. Plays a role in the quality control of integral membrane proteins. This chain is ATP-dependent zinc metalloprotease FtsH, found in Ureaplasma parvum serovar 3 (strain ATCC 27815 / 27 / NCTC 11736).